Consider the following 265-residue polypeptide: MLASCGAKGRFDQVDDGKIKLASSLTGKRDVILQEVLNKYNSRKAKDDYPIEITKIAGSYDGGRSDLQTRLSVKDKTTFYNMILNYSDTISTLGRSNMELPLDSVDVSQFSENFLSFNDRISGISRKGIYGIPVSMSTDILVINGPVLHYILNSAKKKDGAVTKKNASNSNGNEGTLTVNNDQQTTELWKKIEEAAKTNGKTTQEQTKRDAKQSTSLIQLKEGSANTTEGNASESDKEIKKSWGNYQEVDGGLKGYTFKASVFEN.

Disordered stretches follow at residues 162 to 183 and 196 to 239; these read VTKKNASNSNGNEGTLTVNNDQ and AKTN…DKEI. 2 stretches are compositionally biased toward polar residues: residues 165-183 and 213-233; these read KNASNSNGNEGTLTVNNDQ and QSTSLIQLKEGSANTTEGNAS.

It belongs to the MG185/MG260 family.

This is an uncharacterized protein from Mycoplasma pneumoniae (strain ATCC 29342 / M129 / Subtype 1) (Mycoplasmoides pneumoniae).